Here is a 448-residue protein sequence, read N- to C-terminus: MGSDVRDLNALLPAVSSLGGGGGCGLPVSGARQWAPVLDFAPPGASAYGSLGGPAPPPAPPPPPPPPHSFIKQEPSWGGAEPHEEQCLSAFTLHFSGQFTGTAGACRYGPFGPPPPSQASSGQARMFPNAPYLPSCLESQPSIRNQGYSTVTFDGAPSYGHTPSHHAAQFPNHSFKHEDPMGQQGSLGEQQYSVPPPVYGCHTPTDSCTGSQALLLRTPYSSDNLYQMTSQLECMTWNQMNLGATLKGMAAGSSSSVKWTEGQSNHGTGYESENHTTPILCGAQYRIHTHGVFRGIQDVRRVSGVAPTLVRSASETSEKRPFMCAYPGCNKRYFKLSHLQMHSRKHTGEKPYQCDFKDCERRFSRSDQLKRHQRRHTGVKPFQCKTCQRKFSRSDHLKTHTRTHTGKTSEKPFSCRWHSCQKKFARSDELVRHHNMHQRNMTKLHVAL.

Disordered stretches follow at residues 48–83 (YGSLGGPAPPPAPPPPPPPPHSFIKQEPSWGGAEPH) and 166–186 (HAAQFPNHSFKHEDPMGQQGS). Over residues 54–68 (PAPPPAPPPPPPPPH) the composition is skewed to pro residues. Residues K72 and K176 each participate in a glycyl lysine isopeptide (Lys-Gly) (interchain with G-Cter in SUMO) cross-link. Residues 235–243 (MTWNQMNLG) carry the 9aaTAD motif. 3 C2H2-type zinc fingers span residues 322 to 346 (FMCAYPGCNKRYFKLSHLQMHSRKH), 352 to 376 (YQCDFKDCERRFSRSDQLKRHQRRH), and 382 to 404 (FQCKTCQRKFSRSDHLKTHTRTH). 2 important for interaction with target DNA regions span residues 366-380 (SDQLKRHQRRHTGVK) and 392-400 (SRSDHLKTH). Positions 407–409 (KTS) match the KTS motif motif. The C2H2-type 4 zinc-finger motif lies at 413–437 (FSCRWHSCQKKFARSDELVRHHNMH). K443 is covalently cross-linked (Glycyl lysine isopeptide (Lys-Gly) (interchain with G-Cter in SUMO2)).

It belongs to the EGR C2H2-type zinc-finger protein family. In terms of assembly, interacts with ZNF224 via the zinc-finger region. Interacts with WTAP, AMER1 and SRY. Homodimer. Interacts with WTIP. Interacts with actively translating polysomes. Detected in nuclear ribonucleoprotein (mRNP) particles. Interacts with U2AF2. Interacts with HNRNPU via the zinc-finger region. Interacts with CITED2. In terms of tissue distribution, kidney.

It localises to the nucleus speckle. The protein resides in the nucleus. Its subcellular location is the nucleoplasm. The protein localises to the nucleolus. It is found in the cytoplasm. Its function is as follows. Transcription factor that plays an important role in cellular development and cell survival. Recognizes and binds to the DNA sequence 5'-GCG(T/G)GGGCG-3'. Regulates the expression of numerous target genes, including EPO. Plays an essential role for development of the urogenital system. It has a tumor suppressor as well as an oncogenic role in tumor formation. Function may be isoform-specific: isoforms lacking the KTS motif may act as transcription factors. Isoforms containing the KTS motif may bind mRNA and play a role in mRNA metabolism or splicing. Isoform 1 has lower affinity for DNA, and can bind RNA. This Rattus norvegicus (Rat) protein is Wilms tumor protein homolog (Wt1).